The primary structure comprises 145 residues: Deoxyuridine 5'-triphosphate nucleotidohydrolase (145 aa).

Substrate-binding positions include 65–67, asparagine 78, 82–84, and lysine 92; these read RSG and TID.

This sequence belongs to the dUTPase family. Requires Mg(2+) as cofactor.

It catalyses the reaction dUTP + H2O = dUMP + diphosphate + H(+). The protein operates within pyrimidine metabolism; dUMP biosynthesis; dUMP from dCTP (dUTP route): step 2/2. Its function is as follows. This enzyme is involved in nucleotide metabolism: it produces dUMP, the immediate precursor of thymidine nucleotides and it decreases the intracellular concentration of dUTP so that uracil cannot be incorporated into DNA. The chain is Deoxyuridine 5'-triphosphate nucleotidohydrolase from Syntrophomonas wolfei subsp. wolfei (strain DSM 2245B / Goettingen).